The primary structure comprises 490 residues: ATP synthase subunit beta, chloroplastic (490 aa).

170 to 177 serves as a coordination point for ATP; the sequence is GGAGVGKT.

Belongs to the ATPase alpha/beta chains family. F-type ATPases have 2 components, CF(1) - the catalytic core - and CF(0) - the membrane proton channel. CF(1) has five subunits: alpha(3), beta(3), gamma(1), delta(1), epsilon(1). CF(0) has four main subunits: a(1), b(1), b'(1) and c(9-12).

The protein resides in the plastid. Its subcellular location is the chloroplast thylakoid membrane. The enzyme catalyses ATP + H2O + 4 H(+)(in) = ADP + phosphate + 5 H(+)(out). In terms of biological role, produces ATP from ADP in the presence of a proton gradient across the membrane. The catalytic sites are hosted primarily by the beta subunits. This chain is ATP synthase subunit beta, chloroplastic, found in Pinus koraiensis (Korean pine).